Reading from the N-terminus, the 121-residue chain is Ig heavy chain V region MPC 11 (121 aa).

One can recognise an Ig-like domain in the interval 1-112 (EAQLQQSGAE…NSSPYFDSWG (112 aa)).

The chain is Ig heavy chain V region MPC 11 from Mus musculus (Mouse).